The following is a 146-amino-acid chain: Aspartate carbamoyltransferase regulatory chain (146 aa).

Zn(2+) is bound by residues Cys102, Cys107, Cys131, and Cys134.

This sequence belongs to the PyrI family. As to quaternary structure, contains catalytic and regulatory chains. Requires Zn(2+) as cofactor.

Functionally, involved in allosteric regulation of aspartate carbamoyltransferase. The chain is Aspartate carbamoyltransferase regulatory chain from Clostridium acetobutylicum (strain ATCC 824 / DSM 792 / JCM 1419 / IAM 19013 / LMG 5710 / NBRC 13948 / NRRL B-527 / VKM B-1787 / 2291 / W).